We begin with the raw amino-acid sequence, 658 residues long: Serine/threonine-protein kinase shk1/pak1 (658 aa).

Disordered regions lie at residues 1 to 21 (MERG…ITPI), 39 to 104 (RKLK…SYDE), 126 to 147 (GGSS…STVI), and 213 to 365 (GAKP…QQSN). The span at 66–98 (PLSQSRTTVSRVSLGSRQHSSSSIRKLQTNVSD) shows a compositional bias: polar residues. Over residues 129–140 (SPTSSYGSGSAS) the composition is skewed to low complexity. One can recognise a CRIB domain in the interval 147-160 (ISSPFDPKHVTHVG). Composition is skewed to low complexity over residues 226-254 (PLLS…LYPS) and 262-272 (ASSSSSPLLSS). Residues 273-300 (QTVKTTTSNASRQPSPLVSSKSTDNIIR) are compositionally biased toward polar residues. Phosphoserine occurs at positions 301 and 303. The region spanning 386-637 (YRNFVKIGQG…SGELLRHPFL (252 aa)) is the Protein kinase domain. ATP is bound by residues 392 to 400 (IGQGASGDV) and Lys415. Asp505 (proton acceptor) is an active-site residue.

This sequence belongs to the protein kinase superfamily. STE Ser/Thr protein kinase family. STE20 subfamily. Forms an activated complex with GTP-bound ras-like cdc42. Interacts with skb1 and the SH3 domain of skb5 via its amino-terminal regulatory domain. Skb1, cdc42 and shk1 are able to form a ternary complex in vivo. Interacts with rga8 and may interact with byr2. Post-translationally, autophosphorylated on serine residues.

The protein localises to the cytoplasm. Its subcellular location is the cytoskeleton. It localises to the spindle. The enzyme catalyses L-seryl-[protein] + ATP = O-phospho-L-seryl-[protein] + ADP + H(+). The catalysed reaction is L-threonyl-[protein] + ATP = O-phospho-L-threonyl-[protein] + ADP + H(+). In terms of biological role, MAP4K component of the MAPK pathway required for the mating pheromone response. Phosphorylates histone H2B to form H2BS10ph. Phosphorylates tea1. Required for skb1-dependent mitotic inhibitory function. Regulates microtubule dynamics and cell polarity. The sequence is that of Serine/threonine-protein kinase shk1/pak1 (shk1) from Schizosaccharomyces pombe (strain 972 / ATCC 24843) (Fission yeast).